The following is a 224-amino-acid chain: Urease accessory protein UreF (224 aa).

Belongs to the UreF family. As to quaternary structure, ureD, UreF and UreG form a complex that acts as a GTP-hydrolysis-dependent molecular chaperone, activating the urease apoprotein by helping to assemble the nickel containing metallocenter of UreC. The UreE protein probably delivers the nickel.

The protein resides in the cytoplasm. Required for maturation of urease via the functional incorporation of the urease nickel metallocenter. The sequence is that of Urease accessory protein UreF from Pseudomonas fluorescens (strain ATCC BAA-477 / NRRL B-23932 / Pf-5).